A 570-amino-acid polypeptide reads, in one-letter code: Sulfite reductase [NADPH] hemoprotein beta-component (570 aa).

Residues Cys-434, Cys-440, Cys-479, and Cys-483 each coordinate [4Fe-4S] cluster. A siroheme-binding site is contributed by Cys-483.

The protein belongs to the nitrite and sulfite reductase 4Fe-4S domain family. Alpha(8)-beta(8). The alpha component is a flavoprotein, the beta component is a hemoprotein. Siroheme serves as cofactor. [4Fe-4S] cluster is required as a cofactor.

The catalysed reaction is hydrogen sulfide + 3 NADP(+) + 3 H2O = sulfite + 3 NADPH + 4 H(+). It functions in the pathway sulfur metabolism; hydrogen sulfide biosynthesis; hydrogen sulfide from sulfite (NADPH route): step 1/1. In terms of biological role, component of the sulfite reductase complex that catalyzes the 6-electron reduction of sulfite to sulfide. This is one of several activities required for the biosynthesis of L-cysteine from sulfate. This is Sulfite reductase [NADPH] hemoprotein beta-component from Escherichia coli O127:H6 (strain E2348/69 / EPEC).